The primary structure comprises 262 residues: Virulence regulon transcriptional activator VirF (262 aa).

Positions 161-258 (DQIRKIVEKN…GITPKKFYLY (98 aa)) constitute an HTH araC/xylS-type domain. 2 DNA-binding regions (H-T-H motif) span residues 178-199 (SDISNNLNLSEIAVRKRLESEK) and 225-248 (INDVSRLIGISSPSYFIRKFNEYY).

In terms of assembly, homodimer.

Its function is as follows. Primary regulator of plasmid-encoded virulence genes. Activates the transcription of icsA (virG) and of virB, which is an activator of the ipaABCD virulence regulon. The sequence is that of Virulence regulon transcriptional activator VirF (virF) from Shigella dysenteriae.